The primary structure comprises 238 residues: Pyridoxine 5'-phosphate synthase (238 aa).

3-amino-2-oxopropyl phosphate is bound at residue Asn9. Position 11 to 12 (11 to 12) interacts with 1-deoxy-D-xylulose 5-phosphate; that stretch reads DH. 3-amino-2-oxopropyl phosphate is bound at residue Arg20. His45 serves as the catalytic Proton acceptor. The 1-deoxy-D-xylulose 5-phosphate site is built by Arg47 and His52. Glu72 serves as the catalytic Proton acceptor. Thr102 contacts 1-deoxy-D-xylulose 5-phosphate. The active-site Proton donor is His189. 3-amino-2-oxopropyl phosphate contacts are provided by residues Gly190 and 211 to 212; that span reads GH.

This sequence belongs to the PNP synthase family. As to quaternary structure, homooctamer; tetramer of dimers.

The protein resides in the cytoplasm. It carries out the reaction 3-amino-2-oxopropyl phosphate + 1-deoxy-D-xylulose 5-phosphate = pyridoxine 5'-phosphate + phosphate + 2 H2O + H(+). The protein operates within cofactor biosynthesis; pyridoxine 5'-phosphate biosynthesis; pyridoxine 5'-phosphate from D-erythrose 4-phosphate: step 5/5. Functionally, catalyzes the complicated ring closure reaction between the two acyclic compounds 1-deoxy-D-xylulose-5-phosphate (DXP) and 3-amino-2-oxopropyl phosphate (1-amino-acetone-3-phosphate or AAP) to form pyridoxine 5'-phosphate (PNP) and inorganic phosphate. This Ehrlichia ruminantium (strain Gardel) protein is Pyridoxine 5'-phosphate synthase.